Consider the following 394-residue polypeptide: Phosphoglycerate kinase (394 aa).

Residues 21–23, Arg36, 59–62, Arg118, and Arg151 each bind substrate; these read DFN and HLGR. Ser183 carries the post-translational modification Phosphoserine. Lys201 is a binding site for ATP. At Thr299 the chain carries Phosphothreonine. ATP is bound by residues Glu323 and 350–353; that span reads GGDS.

This sequence belongs to the phosphoglycerate kinase family. As to quaternary structure, monomer.

The protein localises to the cytoplasm. The enzyme catalyses (2R)-3-phosphoglycerate + ATP = (2R)-3-phospho-glyceroyl phosphate + ADP. Its pathway is carbohydrate degradation; glycolysis; pyruvate from D-glyceraldehyde 3-phosphate: step 2/5. This chain is Phosphoglycerate kinase, found in Bacillus pumilus (strain SAFR-032).